The chain runs to 207 residues: Small ribosomal subunit protein uS4c (207 aa).

Residues 92–156 enclose the S4 RNA-binding domain; it reads MRLDNILFRL…YQSIITKRIE (65 aa).

The protein belongs to the universal ribosomal protein uS4 family. As to quaternary structure, part of the 30S ribosomal subunit. Contacts protein S5. The interaction surface between S4 and S5 is involved in control of translational fidelity.

The protein resides in the plastid. It localises to the chloroplast. One of the primary rRNA binding proteins, it binds directly to 16S rRNA where it nucleates assembly of the body of the 30S subunit. Functionally, with S5 and S12 plays an important role in translational accuracy. This chain is Small ribosomal subunit protein uS4c (rps4), found in Equisetum sylvaticum (Wood horsetail).